Here is a 633-residue protein sequence, read N- to C-terminus: Ankyrin repeat and SOCS box protein 2 (633 aa).

Positions 26–45 (SEDELVQMAIEQSLADKTRG) constitute a UIM domain. ANK repeat units follow at residues 102–131 (APVDPVLKAIKEDDEEALTAMIKAGKNLSE), 135–165 (EGWLPLHEAAYYGQLNCLKALHRAYPAVIDQ), 169–198 (QEETALYLATCRGHVDCLQFLLQAGAEPDI), 202–231 (SRETPLYKACERKNVEAVRILVQYKADTNH), 235–264 (RGWTALHESVARNDLEVMEILVSGGAKVEA), 268–297 (YGITPLFVAAQSGQLEALRFLAKYGADINT), 301–330 (DSASALYEACKNGHEEVVEFLLSQGADANK), 334–363 (DGMLPLHIASKKGNYRIVQMLLPVTSRTRV), 366–395 (SGISPLHLAAERNNDEVLEALLGARFDVNA), 408–437 (RRSSALYFAVVNNNVYATELLLLAGADPNR), 438–467 (DVINPLLVAIRHGCLRTMQLLLDHGANIDA), and 474–502 (TAFPATIMFAMKCLSLLKFLMDLGCNGEP). S369 carries the phosphoserine modification. Positions 579–633 (EDWAVIKEKAEPPRPLAHLCRLRVRKAIGKYRIKLLDTLPLPGRLIRYLKYENTQ) constitute an SOCS box domain.

Belongs to the ankyrin SOCS box (ASB) family. In terms of assembly, component of a probable ECS E3 ubiquitin-protein ligase complex which contains CUL5, either RBX1 or RNF7/RBX2, Elongin BC complex (ELOB and ELOC) and ASB2. Interacts with SKP2. Through its interaction with SKP2, likely to bridge the formation of dimeric E3-ubiquitin-protein ligase complexes composed of an ECS complex and an SCF(SKP2) complex. Interacts with JAK2; the interaction targets JAK2 for Notch-mediated proteasomal degradation. Interacts with TCF3/E2A; the interaction is mediated by SKP2 and targets TCF3 for Notch-mediated proteasomal degradation. Interacts with DES. In terms of processing, monoubiquitinated.

It is found in the cytoplasm. It localises to the cytoskeleton. Its subcellular location is the stress fiber. The protein localises to the myofibril. The protein resides in the sarcomere. It is found in the z line. Its pathway is protein modification; protein ubiquitination. Its function is as follows. Substrate-recognition component of a SCF-like ECS (Elongin-Cullin-SOCS-box protein) E3 ubiquitin-protein ligase complex which mediates the ubiquitination and subsequent proteasomal degradation of target proteins. Mediates Notch-induced ubiquitination and degradation of substrates including E2A and JAK2. Required during embryonic heart development for complete heart looping. Required for cardiomyocyte differentiation. Involved in myogenic differentiation and targets filamin FLNB for proteasomal degradation but not filamin FLNA. Also targets DES for proteasomal degradation. Acts as a negative regulator of skeletal muscle mass. The sequence is that of Ankyrin repeat and SOCS box protein 2 from Bos taurus (Bovine).